The following is a 401-amino-acid chain: tRNA pseudouridine synthase Pus10 (401 aa).

The THUMP domain maps to 64-195; it reads ALAKSGHRES…DGSVSVEVMP (132 aa).

It belongs to the pseudouridine synthase Pus10 family.

The catalysed reaction is uridine(54) in tRNA = pseudouridine(54) in tRNA. The enzyme catalyses uridine(55) in tRNA = pseudouridine(55) in tRNA. In terms of biological role, responsible for synthesis of pseudouridine from uracil-54 and uracil-55 in the psi GC loop of transfer RNAs. This chain is tRNA pseudouridine synthase Pus10, found in Caldivirga maquilingensis (strain ATCC 700844 / DSM 13496 / JCM 10307 / IC-167).